The chain runs to 104 residues: uncharacterized protein (104 aa).

Positions 1–18 are cleaved as a signal peptide; it reads MGVEGMWNVFLFSLQVAA. The N-linked (GlcNAc...) asparagine; by host glycan is linked to asparagine 27.

This is an uncharacterized protein from Fowl adenovirus A serotype 1 (strain CELO / Phelps) (FAdV-1).